A 179-amino-acid chain; its full sequence is Adenine phosphoribosyltransferase (179 aa).

This sequence belongs to the purine/pyrimidine phosphoribosyltransferase family. Homodimer.

Its subcellular location is the cytoplasm. It catalyses the reaction AMP + diphosphate = 5-phospho-alpha-D-ribose 1-diphosphate + adenine. It functions in the pathway purine metabolism; AMP biosynthesis via salvage pathway; AMP from adenine: step 1/1. Catalyzes a salvage reaction resulting in the formation of AMP, that is energically less costly than de novo synthesis. The protein is Adenine phosphoribosyltransferase of Helicobacter pylori (strain ATCC 700392 / 26695) (Campylobacter pylori).